The sequence spans 762 residues: FAST kinase domain-containing protein 5, mitochondrial (762 aa).

A Phosphoserine modification is found at Ser-95. N6-acetyllysine is present on Lys-506. One can recognise an RAP domain in the interval 695–755 (LAIQFTNKNQ…RLEKLAYLHE (61 aa)).

It belongs to the FAST kinase family. In terms of assembly, found in a complex with GRSF1, DDX28, DHX30 and FASTKD2. Associates with the 12S mitochondrial rRNA (12S mt-rRNA). Expression detected in spleen, testis, colon, heart, smooth muscle, kidney, brain, lung, liver, brown and white adipose tissue.

The protein resides in the mitochondrion matrix. It is found in the mitochondrion nucleoid. Plays an important role in the processing of non-canonical mitochondrial mRNA precursors. The sequence is that of FAST kinase domain-containing protein 5, mitochondrial (Fastkd5) from Mus musculus (Mouse).